A 165-amino-acid chain; its full sequence is Lipoprotein signal peptidase (165 aa).

The next 3 helical transmembrane spans lie at 12-32 (WLWV…LILQ), 70-90 (WFFA…MYRS), and 102-122 (ALII…GFVV). Catalysis depends on residues Asp123 and Asp141. Residues 137–157 (FNLADSAICIGAALIVLEGFL) form a helical membrane-spanning segment.

It belongs to the peptidase A8 family.

The protein localises to the cell inner membrane. The catalysed reaction is Release of signal peptides from bacterial membrane prolipoproteins. Hydrolyzes -Xaa-Yaa-Zaa-|-(S,diacylglyceryl)Cys-, in which Xaa is hydrophobic (preferably Leu), and Yaa (Ala or Ser) and Zaa (Gly or Ala) have small, neutral side chains.. It functions in the pathway protein modification; lipoprotein biosynthesis (signal peptide cleavage). Functionally, this protein specifically catalyzes the removal of signal peptides from prolipoproteins. The protein is Lipoprotein signal peptidase of Klebsiella aerogenes (strain ATCC 13048 / DSM 30053 / CCUG 1429 / JCM 1235 / KCTC 2190 / NBRC 13534 / NCIMB 10102 / NCTC 10006 / CDC 819-56) (Enterobacter aerogenes).